The sequence spans 392 residues: MTTQFACSGIELELFRYPSQQASNLQAWDAADEHLVKYLIDTEITATTTAILNDNFGALTCALTMQYPHSELLVETDAKTSLLGYQQNLLHNKLASTNIHWLNSRETLPQNIQLVLMKLPKNLHYFGQQLARLSTVLPAGTQILIGAKAKSINPALLASIEKNLGPASASLAWKKTRVISCISDGKKRSLAKAVSWNVDELKLTISNLANVFAANKLDIGARIMLDNMPKGEFKHIIDLGCGNGILGLHAKQCYPNAQIHFVDDSDMAIASAKHNWQANELDTPSQDLQSQDPQTEQMPQAFFHWDDCLSNLPADVEPDLVICNPPFHQGEAITDHIAWQMFVDAHKRLKKGGLLHIVGNRHLAYHVKINRIFKNCTTVASNGKFVILQAIK.

It belongs to the methyltransferase superfamily. RlmG family.

It is found in the cytoplasm. The catalysed reaction is guanosine(1835) in 23S rRNA + S-adenosyl-L-methionine = N(2)-methylguanosine(1835) in 23S rRNA + S-adenosyl-L-homocysteine + H(+). In terms of biological role, specifically methylates the guanine in position 1835 (m2G1835) of 23S rRNA. This Shewanella frigidimarina (strain NCIMB 400) protein is Ribosomal RNA large subunit methyltransferase G.